The sequence spans 328 residues: GTP 3',8-cyclase (328 aa).

In terms of domain architecture, Radical SAM core spans 1–229 (MNQVDYLRIS…ESQVRGAGPA (229 aa)). Residue Arg-8 coordinates GTP. Positions 15 and 19 each coordinate [4Fe-4S] cluster. Residue Tyr-21 participates in S-adenosyl-L-methionine binding. Cys-22 contacts [4Fe-4S] cluster. Arg-60 provides a ligand contact to GTP. Gly-64 contacts S-adenosyl-L-methionine. Thr-91 contacts GTP. Ser-115 serves as a coordination point for S-adenosyl-L-methionine. Lys-155 contacts GTP. Met-189 serves as a coordination point for S-adenosyl-L-methionine. [4Fe-4S] cluster contacts are provided by Cys-252 and Cys-255. 257-259 (RMR) is a GTP binding site. Cys-269 contacts [4Fe-4S] cluster.

This sequence belongs to the radical SAM superfamily. MoaA family. In terms of assembly, monomer and homodimer. The cofactor is [4Fe-4S] cluster.

It catalyses the reaction GTP + AH2 + S-adenosyl-L-methionine = (8S)-3',8-cyclo-7,8-dihydroguanosine 5'-triphosphate + 5'-deoxyadenosine + L-methionine + A + H(+). The protein operates within cofactor biosynthesis; molybdopterin biosynthesis. Its function is as follows. Catalyzes the cyclization of GTP to (8S)-3',8-cyclo-7,8-dihydroguanosine 5'-triphosphate. The sequence is that of GTP 3',8-cyclase from Nostoc punctiforme (strain ATCC 29133 / PCC 73102).